A 282-amino-acid polypeptide reads, in one-letter code: Bifunctional protein FolD (282 aa).

NADP(+) contacts are provided by residues 165 to 167 (GRS), S190, and T231.

Belongs to the tetrahydrofolate dehydrogenase/cyclohydrolase family. As to quaternary structure, homodimer.

The catalysed reaction is (6R)-5,10-methylene-5,6,7,8-tetrahydrofolate + NADP(+) = (6R)-5,10-methenyltetrahydrofolate + NADPH. It catalyses the reaction (6R)-5,10-methenyltetrahydrofolate + H2O = (6R)-10-formyltetrahydrofolate + H(+). It functions in the pathway one-carbon metabolism; tetrahydrofolate interconversion. Functionally, catalyzes the oxidation of 5,10-methylenetetrahydrofolate to 5,10-methenyltetrahydrofolate and then the hydrolysis of 5,10-methenyltetrahydrofolate to 10-formyltetrahydrofolate. In Clostridium botulinum (strain Eklund 17B / Type B), this protein is Bifunctional protein FolD.